Consider the following 562-residue polypeptide: Serine/threonine-protein kinase dst3 (562 aa).

In terms of domain architecture, Protein kinase spans 23–285 (FQIVEVVGSG…AQQLLSHPFI (263 aa)). Residues 29-37 (VGSGSFGTV) and Lys-59 each bind ATP. Asp-154 (proton acceptor) is an active-site residue. Disordered regions lie at residues 316-339 (LEEQEQQRNSSGSKMVSSVPTRAS) and 366-562 (SIMR…NVNI). The span at 322–339 (QRNSSGSKMVSSVPTRAS) shows a compositional bias: polar residues. 3 stretches are compositionally biased toward low complexity: residues 421–431 (NNNNNNNNTTT), 442–454 (QQQQQQQQQNNNK), and 476–494 (TTPTTPTTTQPNTSTTTKT). The span at 495–522 (GSSLNIKPTNNVNRSTISIGQQKSPLQS) shows a compositional bias: polar residues. The span at 542–562 (EDEEDEEEFNHEDYEEINVNI) shows a compositional bias: acidic residues.

The protein belongs to the protein kinase superfamily. STE Ser/Thr protein kinase family. STE20 subfamily. Mg(2+) serves as cofactor.

The catalysed reaction is L-seryl-[protein] + ATP = O-phospho-L-seryl-[protein] + ADP + H(+). It carries out the reaction L-threonyl-[protein] + ATP = O-phospho-L-threonyl-[protein] + ADP + H(+). In Dictyostelium discoideum (Social amoeba), this protein is Serine/threonine-protein kinase dst3.